The sequence spans 744 residues: Serine/threonine-protein kinase GM11705 (744 aa).

Residues 17–35 (VLSSHQPSPSATHPQSVPS) are compositionally biased toward polar residues. Disordered regions lie at residues 17–38 (VLSS…SKAN) and 54–78 (NVQE…PEKE). 2 Doublecortin domains span residues 154–240 (LRIK…VEYN) and 309–392 (RIVT…AEDF). The Protein kinase domain maps to 473–731 (YTLGRIIGDG…SEDILDHPWT (259 aa)). ATP is bound by residues 479-487 (IGDGNFAIV) and K502. D594 serves as the catalytic Proton acceptor.

It belongs to the protein kinase superfamily. CAMK Ser/Thr protein kinase family. CaMK subfamily.

The enzyme catalyses L-seryl-[protein] + ATP = O-phospho-L-seryl-[protein] + ADP + H(+). It carries out the reaction L-threonyl-[protein] + ATP = O-phospho-L-threonyl-[protein] + ADP + H(+). The protein is Serine/threonine-protein kinase GM11705 of Drosophila sechellia (Fruit fly).